A 560-amino-acid chain; its full sequence is Nuclear hormone receptor family member nhr-8 (560 aa).

The disordered stretch occupies residues 1–21 (MPSSSPSMDESRRSAVPPKEP). Positions 23–98 (GRICTVCSDR…VGMNSEWLND (76 aa)) form a DNA-binding region, nuclear receptor. NR C4-type zinc fingers lie at residues 26–46 (CTVC…CESC) and 62–86 (CPFS…LNKC). Residues 336 to 560 (DEITLLEELH…PLIRELCSFE (225 aa)) form the NR LBD domain.

The protein belongs to the nuclear hormone receptor family.

Its subcellular location is the nucleus. Functionally, orphan nuclear receptor. The sequence is that of Nuclear hormone receptor family member nhr-8 (nhr-8) from Caenorhabditis elegans.